The primary structure comprises 160 residues: uncharacterized protein (160 aa).

At Met1–Ala33 the chain is on the extracellular side. The helical transmembrane segment at Ala34–Val54 threads the bilayer. At Glu55–Ser68 the chain is on the cytoplasmic side. A helical membrane pass occupies residues Phe69–Ser89. Residues Thr90–Val119 lie on the Extracellular side of the membrane. The chain crosses the membrane as a helical span at residues Thr120 to Val140. Residues Lys141–Leu160 lie on the Cytoplasmic side of the membrane.

Its subcellular location is the membrane. This is an uncharacterized protein from Saccharomyces cerevisiae (strain ATCC 204508 / S288c) (Baker's yeast).